The primary structure comprises 181 residues: Inner membrane-spanning protein YciB (181 aa).

5 consecutive transmembrane segments (helical) span residues 10–30 (LIIFFALYKFYDIYVATGALI), 50–70 (MQLITFVMVALFGGMTLALHD), 80–100 (IVYVVFALGLTISQIMGKPAI), 120–140 (WAWVMFFSGCAALNLYVAYHL), and 148–168 (FKVFGLLAATFVFTLLTGGYI).

Belongs to the YciB family.

Its subcellular location is the cell inner membrane. Its function is as follows. Plays a role in cell envelope biogenesis, maintenance of cell envelope integrity and membrane homeostasis. In Vibrio cholerae serotype O1 (strain ATCC 39541 / Classical Ogawa 395 / O395), this protein is Inner membrane-spanning protein YciB.